Consider the following 628-residue polypeptide: Nuclear receptor subfamily 4 group A member 3 (628 aa).

Positions 1–112 are activation function (AF)-1 domain; the sequence is MPCVQAQYSP…HHHHHHHHHH (112 aa). Residues 1 to 140 are required for DNA-PK heterotrimer; sequence MPCVQAQYSP…PSTSMYFKQS (140 aa). The tract at residues 1–293 is interaction with NCOA1, NCOA2, NCOA3 and KAT2B; it reads MPCVQAQYSP…NRSSSSGEGT (293 aa). Disordered stretches follow at residues 96 to 163 and 269 to 290; these read HGYH…DELP and ASSL…SSSG. Residues 97-113 are compositionally biased toward basic residues; the sequence is GYHHHHHHHHHHHHHHQ. Pro residues predominate over residues 142–151; the sequence is PSTPTTPGFP. The span at 270 to 289 shows a compositional bias: low complexity; that stretch reads SSLLGESPSLPSPPNRSSSS. A DNA-binding region (nuclear receptor) is located at residues 291 to 366; it reads EGTCAVCGDN…VGMVKEVVRT (76 aa). NR C4-type zinc fingers lie at residues 294–314 and 330–354; these read CAVC…CEGC and CLAN…FQKC. The disordered stretch occupies residues 366–396; the sequence is TDSLKGRRGRLPSKPKSPLQQEPSQPSPPSP. The segment covering 379-389 has biased composition (low complexity); it reads KPKSPLQQEPS. The interval 381–628 is interaction with KAT2B; the sequence is KSPLQQEPSQ…DKLFLDTLPF (248 aa). Residues 396–625 form the NR LBD domain; the sequence is PPICMMNALV…SVIDKLFLDT (230 aa).

Belongs to the nuclear hormone receptor family. NR4 subfamily. Interacts with SIX3 (via homeobox); differentially regulates the transcriptional activities of NR4A3. Interacts with NR3C1 (via nuclear receptor DNA-binding domain); the interactions represses transcription activity of NR4A3 on the POMC promoter Nur response element (NurRE). Interacts with TRIM28; the interactions potentiates NR4A3 activity on NurRE promoter. Binds DNA as a monomer and homodimer. Interacts with PARP1; activates PARP1 by improving acetylation of PARP1 and suppressing the interaction between PARP1 and SIRT1. Interacts with the constituents of DNA-PK heterotrimer PRKDC, XRCC6 and XRCC5; phosphorylates and prevents NR4A3 ubiquitinylation and degradation. Interacts with NCOA2; potentiates the activity of the NR4A3. Interacts with NCOA1, NCOA3, MED1 and KAT2B. Interacts with EP300 and NCOA2; mediates the recruitment of MED1 in the coactivator complex. Post-translationally, phosphorylated by PRKDC. As to expression, expressed at high levels in cultured apoptotic neuronal cells and fetal brain, and at low level in adult brain.

The protein resides in the nucleus. Functionally, transcriptional activator that binds to regulatory elements in promoter regions in a cell- and response element (target)-specific manner. Induces gene expression by binding as monomers to the NR4A1 response element (NBRE) 5'-AAAAGGTCA-3' site and as homodimers to the Nur response element (NurRE) site in the promoter of their regulated target genes. Plays a role in the regulation of proliferation, survival and differentiation of many different cell types and also in metabolism and inflammation. Mediates proliferation of vascular smooth muscle, myeloid progenitor cell and type B pancreatic cells; promotes mitogen-induced vascular smooth muscle cell proliferation through transactivation of SKP2 promoter by binding a NBRE site. Upon PDGF stimulation, stimulates vascular smooth muscle cell proliferation by regulating CCND1 and CCND2 expression. In islets, induces type B pancreatic cell proliferation through up-regulation of genes that activate cell cycle, as well as genes that cause degradation of the CDKN1A. Negatively regulates myeloid progenitor cell proliferation by repressing RUNX1 in a NBRE site-independent manner. During inner ear, plays a role as a key mediator of the proliferative growth phase of semicircular canal development. Also mediates survival of neuron and smooth muscle cells; mediates CREB-induced neuronal survival, and during hippocampus development, plays a critical role in pyramidal cell survival and axonal guidance. Is required for S phase entry of the cell cycle and survival of smooth muscle cells by inducing CCND1, resulting in RB1 phosphorylation. Binds to NBRE motif in CCND1 promoter, resulting in the activation of the promoter and CCND1 transcription. Also plays a role in inflammation; Upon TNF stimulation, mediates monocyte adhesion by inducing the expression of VCAM1 and ICAM1 by binding to the NBRE consensus site. In mast cells activated by Fc-epsilon receptor cross-linking, promotes the synthesis and release of cytokines but impairs events leading to degranulation. Also plays a role in metabolism; by modulating feeding behavior; and by playing a role in energy balance by inhibiting the glucocorticoid-induced orexigenic neuropeptides AGRP expression, at least in part by forming a complex with activated NR3C1 on the AGRP-glucocorticoid response element (GRE), and thus weakening the DNA binding activity of NR3C1. Upon catecholamines stimulation, regulates gene expression that controls oxidative metabolism in skeletal muscle. Plays a role in glucose transport by regulating translocation of the SLC2A4 glucose transporter to the cell surface. Finally, during gastrulation plays a crucial role in the formation of anterior mesoderm by controlling cell migration. Also participates in cardiac hypertrophy by activating PARP1. This Rattus norvegicus (Rat) protein is Nuclear receptor subfamily 4 group A member 3 (Nr4a3).